Reading from the N-terminus, the 64-residue chain is MFTLKKSLLLLFFLGTINLSLCEQERNAEEERRDEPDERNAEVEKRFFPIVGKLLSGLSGLLGK.

The signal sequence occupies residues 1 to 22; that stretch reads MFTLKKSLLLLFFLGTINLSLC. Positions 23-46 are excised as a propeptide; the sequence is EQERNAEEERRDEPDERNAEVEKR. At Leu-62 the chain carries Leucine amide.

As to expression, expressed by the skin glands.

It localises to the secreted. In terms of biological role, antimicrobial peptide with activity against Gram-positive and Gram-negative bacteria and against fungi. Has been tested against S.aureus (MIC=2.5 ug/mL), B.pumilus (MIC=5.0 ug/mL), B.cereus (MIC=30.0 ug/mL), E.coli (MIC=2.5 ug/mL), B.dysenteriae (MIC=5.0 ug/mL), A.cacoaceticus (MIC=30.0 ug/mL), P.aeruginosa (MIC=5.0 ug/mL) and C.albicans (MIC=2.5 ug/mL). Also shows a weak hemolytic activity. The chain is Temporin-ALf from Amolops loloensis (Lolokou Sucker Frog).